The sequence spans 551 residues: Probable 4-coumarate--CoA ligase 2 (551 aa).

Residues Ser205, Ser206, Gly207, Thr208, Thr209, and Lys213 each coordinate ATP. (E)-4-coumaroyl-AMP-binding residues include Tyr253 and Thr257. Lys274 contributes to the CoA binding site. The SBD1 stretch occupies residues 276–346 (EFVRFLDLIQ…RFKGKLIIKQ (71 aa)). (E)-4-coumaroyl-AMP contacts are provided by Ala323, Gln346, Gly347, and Thr351. ATP-binding residues include Gln346, Gly347, Thr351, Asp430, and Arg445. The interval 347-409 (GYGATELSPA…IKGPNVMLGY (63 aa)) is SBD2. 2 residues coordinate (E)-4-coumaroyl-AMP: Lys447 and Lys451. Residues Lys453 and Gly454 each coordinate CoA. ATP is bound at residue Lys537.

It belongs to the ATP-dependent AMP-binding enzyme family. The cofactor is Mg(2+).

The catalysed reaction is (E)-4-coumarate + ATP + CoA = (E)-4-coumaroyl-CoA + AMP + diphosphate. It carries out the reaction (E)-4-coumarate + ATP + H(+) = (E)-4-coumaroyl-AMP + diphosphate. The enzyme catalyses (E)-4-coumaroyl-AMP + CoA = (E)-4-coumaroyl-CoA + AMP + H(+). The protein operates within phytoalexin biosynthesis; 3,4',5-trihydroxystilbene biosynthesis; 3,4',5-trihydroxystilbene from trans-4-coumarate: step 1/2. Its function is as follows. Carboxylate--CoA ligase that may use 4-coumarate as substrate. Follows a two-step reaction mechanism, wherein the carboxylate substrate first undergoes adenylation by ATP, followed by a thioesterification in the presence of CoA to yield the final CoA thioester. The chain is Probable 4-coumarate--CoA ligase 2 (4cl2) from Dictyostelium discoideum (Social amoeba).